Consider the following 307-residue polypeptide: GMP synthase [glutamine-hydrolyzing] subunit B (307 aa).

A GMPS ATP-PPase domain is found at 1–184 (MWENFIEEKV…LGLPEKIYNR (184 aa)). 27–33 (SGGVDSS) is an ATP binding site.

In terms of assembly, heterodimer composed of a glutamine amidotransferase subunit (A) and a GMP-binding subunit (B).

It catalyses the reaction XMP + L-glutamine + ATP + H2O = GMP + L-glutamate + AMP + diphosphate + 2 H(+). The protein operates within purine metabolism; GMP biosynthesis; GMP from XMP (L-Gln route): step 1/1. Functionally, catalyzes the synthesis of GMP from XMP. The protein is GMP synthase [glutamine-hydrolyzing] subunit B of Thermococcus kodakarensis (strain ATCC BAA-918 / JCM 12380 / KOD1) (Pyrococcus kodakaraensis (strain KOD1)).